A 364-amino-acid polypeptide reads, in one-letter code: Long-wave-sensitive opsin 1 (364 aa).

Residues 1 to 52 are Extracellular-facing; it reads MTQRWGPQRLAGGQPHAGLEDSTRASIFTYTNSNATRGPFEGPNYHIAPRWV. A glycan (O-linked (GlcNAc) serine) is linked at serine 22. Asparagine 34 carries an N-linked (GlcNAc...) asparagine glycan. The helical transmembrane segment at 53–77 threads the bilayer; the sequence is YHVTSAWMIFVVIASVFTNGLVLAA. The Cytoplasmic segment spans residues 78 to 89; the sequence is TMKFKKLRHPLN. Residues 90–115 form a helical membrane-spanning segment; the sequence is WILVNLAVADLAETIIASTISVVNQI. At 116-129 the chain is on the extracellular side; it reads YGYFVLGHPMCVLE. Cysteine 126 and cysteine 203 form a disulfide bridge. A helical transmembrane segment spans residues 130-149; the sequence is GYTVSLCGITGLWSLAIISW. The Cytoplasmic portion of the chain corresponds to 150 to 168; sequence ERWLVVCKPFGNVRFDAKL. The chain crosses the membrane as a helical span at residues 169-192; that stretch reads AIAGIAFSWIWAAVWTAPPIFGWS. Residues 193–218 are Extracellular-facing; it reads RYWPHGLKTSCGPDVFSGSSYPGVQS. A helical transmembrane segment spans residues 219–246; that stretch reads YMIVLMITCCIIPLSVIVLCYLQVWLAI. Over 247–268 the chain is Cytoplasmic; sequence RAVAKQQKESESTQKAEKEVTR. The chain crosses the membrane as a helical span at residues 269-292; it reads MVMVMIFAYCVCWGPYTFFACFAA. The Extracellular segment spans residues 293–300; it reads AHPGYAFH. Residues 301–325 traverse the membrane as a helical segment; that stretch reads PLVAALPAYFAKSATIYNPIIYVFM. An N6-(retinylidene)lysine modification is found at lysine 312. The Cytoplasmic portion of the chain corresponds to 326–364; it reads NRQFRNCIMQLFGKKVDDGSELSSASRTEASSVSSVSPA.

Belongs to the G-protein coupled receptor 1 family. Opsin subfamily. Post-translationally, phosphorylated on some or all of the serine and threonine residues present in the C-terminal region. In terms of tissue distribution, the three color pigments are found in the cone photoreceptor cells. Expressed in retina.

Its subcellular location is the membrane. In terms of biological role, visual pigments are the light-absorbing molecules that mediate vision. They consist of an apoprotein, opsin, covalently linked to cis-retinal. This chain is Long-wave-sensitive opsin 1 (OPN1LW), found in Felis catus (Cat).